The sequence spans 511 residues: 2,3-bisphosphoglycerate-independent phosphoglycerate mutase (511 aa).

D12 provides a ligand contact to Mn(2+). Y36 bears the Phosphotyrosine mark. S62 is a binding site for Mn(2+). The active-site Phosphoserine intermediate is the S62. Substrate is bound by residues H123, 153–154 (RD), R185, R191, 261–264 (RPDR), and K336. 5 residues coordinate Mn(2+): D403, H407, D444, H445, and H462.

This sequence belongs to the BPG-independent phosphoglycerate mutase family. In terms of assembly, monomer. Mn(2+) serves as cofactor.

The enzyme catalyses (2R)-2-phosphoglycerate = (2R)-3-phosphoglycerate. It participates in carbohydrate degradation; glycolysis; pyruvate from D-glyceraldehyde 3-phosphate: step 3/5. In terms of biological role, catalyzes the interconversion of 2-phosphoglycerate and 3-phosphoglycerate. The chain is 2,3-bisphosphoglycerate-independent phosphoglycerate mutase from Geobacillus thermodenitrificans (strain NG80-2).